We begin with the raw amino-acid sequence, 112 residues long: Putative membrane protein insertion efficiency factor (112 aa).

Belongs to the UPF0161 family.

Its subcellular location is the cell inner membrane. In terms of biological role, could be involved in insertion of integral membrane proteins into the membrane. This Bradyrhizobium diazoefficiens (strain JCM 10833 / BCRC 13528 / IAM 13628 / NBRC 14792 / USDA 110) protein is Putative membrane protein insertion efficiency factor.